The chain runs to 262 residues: MNKPHLLIDAGNSRIKWALADARRTLVDTGAFGHTRDGGADPDWSALPRPHGAWISNVAGADVAARLDALLDARWPGLPRTTIRSRPAQCGVTNGYTTPDQLGSDRWAGLIGARAAFPGEHLLIATFGTATTLEALRADGRFTGGLIAPGWALMMRALGTHTAQLPTLTTDIASGLLAGAQAEPFQVDTPRSLSAGCLYAQAGLIERAWRDLADAWQAPVRLVLAGGAADDVARALTLPHTRHDALILSGLALIAAEGAAQD.

Position 9 to 16 (9 to 16 (DAGNSRIK)) interacts with ATP. Substrate is bound by residues tyrosine 96 and 103–106 (GSDR). Aspartate 105 serves as the catalytic Proton acceptor. Position 129 (threonine 129) interacts with ATP. Residue threonine 189 participates in substrate binding.

It belongs to the type III pantothenate kinase family. Homodimer. Requires NH4(+) as cofactor. K(+) is required as a cofactor.

The protein resides in the cytoplasm. It catalyses the reaction (R)-pantothenate + ATP = (R)-4'-phosphopantothenate + ADP + H(+). Its pathway is cofactor biosynthesis; coenzyme A biosynthesis; CoA from (R)-pantothenate: step 1/5. Catalyzes the phosphorylation of pantothenate (Pan), the first step in CoA biosynthesis. The protein is Type III pantothenate kinase of Burkholderia ambifaria (strain MC40-6).